Here is a 338-residue protein sequence, read N- to C-terminus: Selenocysteine methyltransferase (338 aa).

Positions 1–327 (MSSPLITDFL…DTIRGIYKIL (327 aa)) constitute a Hcy-binding domain. 3 residues coordinate Zn(2+): cysteine 245, cysteine 312, and cysteine 313.

In terms of assembly, monomer. Zn(2+) serves as cofactor. As to expression, present in all tissues tested.

It catalyses the reaction S-methyl-L-methionine + L-selenocysteine = Se-methyl-L-selenocysteine + L-methionine + H(+). In terms of biological role, catalyzes the methylation of selenocysteine with S-methylmethionine as donor. Does not methylate cysteine. This Astragalus bisulcatus (Two-grooved milkvetch) protein is Selenocysteine methyltransferase (SMTA).